A 314-amino-acid polypeptide reads, in one-letter code: Ribosomal RNA small subunit methyltransferase H (314 aa).

Residues 34-36 (GGH), aspartate 54, phenylalanine 83, aspartate 104, and glutamine 111 each bind S-adenosyl-L-methionine.

This sequence belongs to the methyltransferase superfamily. RsmH family.

Its subcellular location is the cytoplasm. It catalyses the reaction cytidine(1402) in 16S rRNA + S-adenosyl-L-methionine = N(4)-methylcytidine(1402) in 16S rRNA + S-adenosyl-L-homocysteine + H(+). In terms of biological role, specifically methylates the N4 position of cytidine in position 1402 (C1402) of 16S rRNA. The sequence is that of Ribosomal RNA small subunit methyltransferase H from Ligilactobacillus salivarius (strain UCC118) (Lactobacillus salivarius).